Here is a 470-residue protein sequence, read N- to C-terminus: Pre-mycofactocin glycosyltransferase (470 aa).

A helical membrane pass occupies residues 315–335; sequence LVISGGALMAWILMSIGTGLG.

Belongs to the glycosyltransferase 2 family.

The protein resides in the cell membrane. Functionally, involved in the biosynthesis of the enzyme cofactor mycofactocin (MFT). Acts as a glycosyltransferase that catalyzes the oligoglycosylation of pre-mycofactocin (PMFT), adding up to nine beta-1,4-linked glucose residues. Is required for the in vivo ethanol assimilation in M.smegmatis. This chain is Pre-mycofactocin glycosyltransferase (mftF), found in Mycobacterium tuberculosis (strain CDC 1551 / Oshkosh).